The primary structure comprises 421 residues: MSKTHLTEQKFSDFALHPAVIEALEKKGFHNCTPIQALALPLTLEGRDVAGQAQTGTGKTMAFLTSTFHYLLSHPAIADRQVNQPRALIMAPTRELAVQIHADAEPLAQATGLKLGLAYGGDGYDKQLKVLESGVDILIGTTGRLIDYAKQNHINLGAIQVVVLDEADRMYDLGFIKDIRWLFRRMPPATQRLNMLFSATLSYRVRELAFEQMNNAEYVEVEPEQKTGHRIKEELFYPSNEEKMRLLQTLLEEEWPDRAIVFANTKHRCEDIWGHLAADGHRVGLLTGDVAQKKRLRILEEFTRGDLDILVATDVAARGLHIPAVTHVFNYDLPDDCEDYVHRIGRTGRAGASGHSISLACEEYALNLPAIETYIGHSIPVSKYNPDALMTDLPKPLRLTRARPGNGPRRNGPPRNRRRSG.

A Q motif motif is present at residues glutamine 9–alanine 37. Positions leucine 40–valine 219 constitute a Helicase ATP-binding domain. Alanine 53–threonine 60 lines the ATP pocket. Positions aspartate 165–aspartate 168 match the DEAD box motif. The region spanning arginine 245–methionine 390 is the Helicase C-terminal domain. The interval proline 396–glycine 421 is disordered. Low complexity predominate over residues arginine 403–proline 414.

Belongs to the DEAD box helicase family. RhlB subfamily. In terms of assembly, component of the RNA degradosome, which is a multiprotein complex involved in RNA processing and mRNA degradation.

It localises to the cytoplasm. The enzyme catalyses ATP + H2O = ADP + phosphate + H(+). Its function is as follows. DEAD-box RNA helicase involved in RNA degradation. Has RNA-dependent ATPase activity and unwinds double-stranded RNA. The chain is ATP-dependent RNA helicase RhlB from Klebsiella pneumoniae subsp. pneumoniae (strain ATCC 700721 / MGH 78578).